The following is a 341-amino-acid chain: S-adenosylmethionine:tRNA ribosyltransferase-isomerase (341 aa).

It belongs to the QueA family. In terms of assembly, monomer.

Its subcellular location is the cytoplasm. It catalyses the reaction 7-aminomethyl-7-carbaguanosine(34) in tRNA + S-adenosyl-L-methionine = epoxyqueuosine(34) in tRNA + adenine + L-methionine + 2 H(+). Its pathway is tRNA modification; tRNA-queuosine biosynthesis. Functionally, transfers and isomerizes the ribose moiety from AdoMet to the 7-aminomethyl group of 7-deazaguanine (preQ1-tRNA) to give epoxyqueuosine (oQ-tRNA). The chain is S-adenosylmethionine:tRNA ribosyltransferase-isomerase from Chlorobium chlorochromatii (strain CaD3).